The primary structure comprises 387 residues: 3-ketoacyl-CoA thiolase (387 aa).

The active-site Acyl-thioester intermediate is C91. Catalysis depends on proton acceptor residues H343 and C373.

The protein belongs to the thiolase-like superfamily. Thiolase family. Heterotetramer of two alpha chains (FadB) and two beta chains (FadA).

It localises to the cytoplasm. The catalysed reaction is an acyl-CoA + acetyl-CoA = a 3-oxoacyl-CoA + CoA. It functions in the pathway lipid metabolism; fatty acid beta-oxidation. In terms of biological role, catalyzes the final step of fatty acid oxidation in which acetyl-CoA is released and the CoA ester of a fatty acid two carbons shorter is formed. In Aliivibrio fischeri (strain ATCC 700601 / ES114) (Vibrio fischeri), this protein is 3-ketoacyl-CoA thiolase.